A 314-amino-acid chain; its full sequence is 2-dehydro-3-deoxygluconokinase (314 aa).

Substrate contacts are provided by residues 28–32 (GDTLN), Tyr-88, 102–104 (YWR), and Arg-170. ATP is bound by residues 168–170 (NYR), 228–233 (KCGKNG), and 260–263 (SAGD). Asp-263 serves as a coordination point for substrate. The Proton acceptor role is filled by Asp-263.

Belongs to the carbohydrate kinase PfkB family.

The enzyme catalyses 2-dehydro-3-deoxy-D-gluconate + ATP = 2-dehydro-3-deoxy-6-phospho-D-gluconate + ADP + H(+). The protein operates within carbohydrate acid metabolism; 2-dehydro-3-deoxy-D-gluconate degradation; D-glyceraldehyde 3-phosphate and pyruvate from 2-dehydro-3-deoxy-D-gluconate: step 1/2. Functionally, catalyzes the phosphorylation of 2-keto-3-deoxygluconate (KDG) to produce 2-keto-3-deoxy-6-phosphogluconate (KDPG). The sequence is that of 2-dehydro-3-deoxygluconokinase (kdgK) from Haemophilus influenzae (strain ATCC 51907 / DSM 11121 / KW20 / Rd).